A 295-amino-acid chain; its full sequence is tRNA-cytidine(32) 2-sulfurtransferase (295 aa).

A PP-loop motif motif is present at residues 63-68 (SGGKDS). The [4Fe-4S] cluster site is built by cysteine 138, cysteine 141, and cysteine 229.

The protein belongs to the TtcA family. In terms of assembly, homodimer. Mg(2+) is required as a cofactor. It depends on [4Fe-4S] cluster as a cofactor.

It localises to the cytoplasm. The enzyme catalyses cytidine(32) in tRNA + S-sulfanyl-L-cysteinyl-[cysteine desulfurase] + AH2 + ATP = 2-thiocytidine(32) in tRNA + L-cysteinyl-[cysteine desulfurase] + A + AMP + diphosphate + H(+). Its pathway is tRNA modification. Its function is as follows. Catalyzes the ATP-dependent 2-thiolation of cytidine in position 32 of tRNA, to form 2-thiocytidine (s(2)C32). The sulfur atoms are provided by the cysteine/cysteine desulfurase (IscS) system. This chain is tRNA-cytidine(32) 2-sulfurtransferase, found in Mesorhizobium japonicum (strain LMG 29417 / CECT 9101 / MAFF 303099) (Mesorhizobium loti (strain MAFF 303099)).